The primary structure comprises 113 residues: Nitrogenase-stabilizing/protective protein NifW (113 aa).

Belongs to the NifW family. In terms of assembly, homotrimer; associates with NifD.

Its function is as follows. May protect the nitrogenase Fe-Mo protein from oxidative damage. This is Nitrogenase-stabilizing/protective protein NifW from Polaromonas naphthalenivorans (strain CJ2).